A 332-amino-acid polypeptide reads, in one-letter code: D-alanine--D-alanine ligase (332 aa).

A compositionally biased stretch (polar residues) spans 1-17 (MPMTMTQSATNPTATPV). The segment at 1 to 28 (MPMTMTQSATNPTATPVSANKASANAAT) is disordered. Positions 18–28 (SANKASANAAT) are enriched in low complexity. An ATP-grasp domain is found at 132 to 329 (KQLWHGCGLS…FEQLCWHILA (198 aa)). 158–213 (VNTLGLPLIVKPVHEGSSIGMSKVNTLDELPKAYEVAAGCGDVVMAEKWITGREFT) is a binding site for ATP. The Mg(2+) site is built by aspartate 283, glutamate 296, and asparagine 298.

It belongs to the D-alanine--D-alanine ligase family. Requires Mg(2+) as cofactor. Mn(2+) serves as cofactor.

Its subcellular location is the cytoplasm. It catalyses the reaction 2 D-alanine + ATP = D-alanyl-D-alanine + ADP + phosphate + H(+). The protein operates within cell wall biogenesis; peptidoglycan biosynthesis. Its function is as follows. Cell wall formation. This chain is D-alanine--D-alanine ligase, found in Psychrobacter sp. (strain PRwf-1).